The sequence spans 322 residues: Protein-methionine-sulfoxide reductase catalytic subunit MsrP (322 aa).

The tat-type signal signal peptide spans 1–59; that stretch reads MSLRDALKTPSSEITDEAVYRDRRRLLQLFALTPALSVAGCAEADPPPPPKTVVTPAQA. Mo-molybdopterin is bound by residues Asn79, 82-83, Cys137, Thr172, Asn220, Arg225, and 236-238; these read YE and SIK.

It belongs to the MsrP family. Heterodimer of a catalytic subunit (MsrP) and a heme-binding subunit (MsrQ). Mo-molybdopterin serves as cofactor. Predicted to be exported by the Tat system. The position of the signal peptide cleavage has not been experimentally proven.

The protein resides in the periplasm. The catalysed reaction is L-methionyl-[protein] + a quinone + H2O = L-methionyl-(S)-S-oxide-[protein] + a quinol. It carries out the reaction L-methionyl-[protein] + a quinone + H2O = L-methionyl-(R)-S-oxide-[protein] + a quinol. Part of the MsrPQ system that repairs oxidized periplasmic proteins containing methionine sulfoxide residues (Met-O), using respiratory chain electrons. Thus protects these proteins from oxidative-stress damage caused by reactive species of oxygen and chlorine generated by the host defense mechanisms. MsrPQ is essential for the maintenance of envelope integrity under bleach stress, rescuing a wide series of structurally unrelated periplasmic proteins from methionine oxidation. The catalytic subunit MsrP is non-stereospecific, being able to reduce both (R-) and (S-) diastereoisomers of methionine sulfoxide. The protein is Protein-methionine-sulfoxide reductase catalytic subunit MsrP of Xanthomonas campestris pv. campestris (strain ATCC 33913 / DSM 3586 / NCPPB 528 / LMG 568 / P 25).